Reading from the N-terminus, the 227-residue chain is DNA repair protein RecO (227 aa).

It belongs to the RecO family.

In terms of biological role, involved in DNA repair and RecF pathway recombination. The chain is DNA repair protein RecO from Pseudomonas putida (strain GB-1).